Reading from the N-terminus, the 508-residue chain is Protein ultraspiracle (508 aa).

Residues 1–103 form a modulating region; that stretch reads MDNCDQDASF…NHPLSGSKHL (103 aa). Disordered stretches follow at residues 21–40 and 55–92; these read PDIS…KAES and PGSN…QQYP. A compositionally biased stretch (polar residues) spans 24–35; the sequence is SQLNDSNNSSFS. Ser35 carries the post-translational modification Phosphoserine. The segment covering 57 to 90 has biased composition (low complexity); that stretch reads SNSASSNNNSAGDAQMAQAPNSAGGSAAAAVQQQ. NR C4-type zinc fingers lie at residues 104-124 and 140-164; these read CSIC…CEGC and CREN…YQKC. The segment at residues 104-169 is a DNA-binding region (nuclear receptor); that stretch reads CSICGDRASG…RYQKCLTCGM (66 aa). The hinge stretch occupies residues 170-223; sequence KREAVQEERQRGARNAAGRLSASGGGSSGPGSVGGSSSQGGGGGGGVSGGMGSG. Residues 178-228 form a disordered region; the sequence is RQRGARNAAGRLSASGGGSSGPGSVGGSSSQGGGGGGGVSGGMGSGNGSDD. Over residues 192–224 the composition is skewed to gly residues; that stretch reads SGGGSSGPGSVGGSSSQGGGGGGGVSGGMGSGN. The NR LBD domain occupies 239-498; sequence SIERIIEAEQ…ELFLEQLEAP (260 aa).

It belongs to the nuclear hormone receptor family. NR2 subfamily. Heterodimer of USP and ECR. Only the heterodimer is capable of high-affinity binding to ecdysone.

The protein localises to the nucleus. Receptor for ecdysone. May be an important modulator of insect metamorphosis. Plays an important part in embryonic and post-embryonic development. Binds to ecdysone response elements (ECRES) such as in the promoter region of s15 chorion gene. In Drosophila melanogaster (Fruit fly), this protein is Protein ultraspiracle (usp).